The sequence spans 319 residues: Transcription factor jun-1 (319 aa).

Disordered regions lie at residues 1–52 and 216–264; these read MEED…EKES and NGVN…CRQK. A compositionally biased stretch (low complexity) spans 8–19; that stretch reads PPSSSTSSESPE. Basic residues predominate over residues 28-38; that stretch reads PTRRRKNSKKD. The tract at residues 244–285 is basic motif; that stretch reads KKKLERKRARNRQAATKCRQKKMDRIKELEEQVLHEKHRGQR. The 64-residue stretch at 244–307 folds into the bZIP domain; the sequence is KKKLERKRAR…EHFRRTVEHH (64 aa). The interval 286–293 is leucine-zipper; sequence LDAELLEL.

This sequence belongs to the bZIP family. Jun subfamily. In terms of assembly, heterodimer; with fos-1. As to expression, isoform a, isoform b, isoform c and isoform d are expressed in the spermatheca.

The protein resides in the nucleus. Its function is as follows. Transcription factor that recognizes and binds to the AP-1 non-canonical enhancer heptamer motif 5'-TTAGTCA-3'. Required for ovulation. Controls plc-1 expression in the spermatheca to regulate spermathecal valve dilation. In Caenorhabditis elegans, this protein is Transcription factor jun-1.